Consider the following 101-residue polypeptide: 2-amino-4-ketopentanoate thiolase alpha subunit (101 aa).

The protein belongs to the OrtA family. Heterodimer with OrtB.

It catalyses the reaction D-alanine + acetyl-CoA = (2R)-2-amino-4-oxopentanoate + CoA. Involved in the ornithine fermentation pathway. Catalyzes the thiolytic cleavage of 2-amino-4-ketopentanoate (AKP) with coenzyme A (CoA) to form acetyl-CoA and alanine. It is strictly specific for AKP. This is 2-amino-4-ketopentanoate thiolase alpha subunit from Unknown prokaryotic organism.